Consider the following 923-residue polypeptide: Protein translocase subunit SecA (923 aa).

Residues Gln-86, 104 to 108 (GEGKT), and Asp-512 each bind ATP. Residues Cys-906, Cys-908, Cys-917, and His-918 each coordinate Zn(2+).

Belongs to the SecA family. As to quaternary structure, monomer and homodimer. Part of the essential Sec protein translocation apparatus which comprises SecA, SecYEG and auxiliary proteins SecDF-YajC and YidC. It depends on Zn(2+) as a cofactor.

The protein localises to the cell inner membrane. Its subcellular location is the cytoplasm. It catalyses the reaction ATP + H2O + cellular proteinSide 1 = ADP + phosphate + cellular proteinSide 2.. Functionally, part of the Sec protein translocase complex. Interacts with the SecYEG preprotein conducting channel. Has a central role in coupling the hydrolysis of ATP to the transfer of proteins into and across the cell membrane, serving both as a receptor for the preprotein-SecB complex and as an ATP-driven molecular motor driving the stepwise translocation of polypeptide chains across the membrane. This Caulobacter vibrioides (strain ATCC 19089 / CIP 103742 / CB 15) (Caulobacter crescentus) protein is Protein translocase subunit SecA.